The chain runs to 463 residues: MIIKKNVSYKDRSFIALTDDTRVIESLLKGEGDKFGLQKDADTDKVLFVKNKQNKNFITPQIAQSCSMVESYELNDILMANFSHNSPNIVGITGTNGKTTTAAIIYSILLDLGFNVALLGTRGFFINEHRIKPKGLTTPSMLELYENLCIAMEQKCNFFIMEVSSHAIEQERIAGLDFALKILTNITSDHLDYHKSVEEYRRIKNSFFEGEGRKLLNADEPYIYCTDKAAYFYGIEKKGNLSVDVYALENGIDGYISWRERDYKTNEQSAIQAHLYGKHNLYNTLAAIGAVKILTQEPLERIAEALEHFGGVSGRMEVVHNMPLVIVDFAHTYDGMYQIFESFRHCKIAVVFGAGGDRDKSKRPKMGACAQQFAHKIYITSDNPRTESPKSIIEDILSGMQDGEYVFVEADRKKAIYMALESLESDEVLLILGKGDEDYQIIGNEKIYFDDREVVRNYFASRT.

UDP-N-acetyl-alpha-D-muramoyl-L-alanyl-D-glutamate is bound at residue T21. G94–T100 serves as a coordination point for ATP. Residues T137 to T138, S164, Q170, and R172 contribute to the UDP-N-acetyl-alpha-D-muramoyl-L-alanyl-D-glutamate site. K204 bears the N6-carboxylysine mark. Residues R358, D382 to R385, G433, and E437 each bind meso-2,6-diaminopimelate. A Meso-diaminopimelate recognition motif motif is present at residues D382–R385.

The protein belongs to the MurCDEF family. MurE subfamily. The cofactor is Mg(2+). In terms of processing, carboxylation is probably crucial for Mg(2+) binding and, consequently, for the gamma-phosphate positioning of ATP.

Its subcellular location is the cytoplasm. It carries out the reaction UDP-N-acetyl-alpha-D-muramoyl-L-alanyl-D-glutamate + meso-2,6-diaminopimelate + ATP = UDP-N-acetyl-alpha-D-muramoyl-L-alanyl-gamma-D-glutamyl-meso-2,6-diaminopimelate + ADP + phosphate + H(+). Its pathway is cell wall biogenesis; peptidoglycan biosynthesis. Functionally, catalyzes the addition of meso-diaminopimelic acid to the nucleotide precursor UDP-N-acetylmuramoyl-L-alanyl-D-glutamate (UMAG) in the biosynthesis of bacterial cell-wall peptidoglycan. In Helicobacter hepaticus (strain ATCC 51449 / 3B1), this protein is UDP-N-acetylmuramoyl-L-alanyl-D-glutamate--2,6-diaminopimelate ligase.